Consider the following 157-residue polypeptide: Large ribosomal subunit protein uL15 (157 aa).

This sequence belongs to the universal ribosomal protein uL15 family. Part of the 50S ribosomal subunit.

Its function is as follows. Binds to the 23S rRNA. The sequence is that of Large ribosomal subunit protein uL15 from Ehrlichia ruminantium (strain Gardel).